A 406-amino-acid chain; its full sequence is Succinylornithine transaminase (406 aa).

N6-(pyridoxal phosphate)lysine is present on Lys252.

Belongs to the class-III pyridoxal-phosphate-dependent aminotransferase family. AstC subfamily. It depends on pyridoxal 5'-phosphate as a cofactor.

It catalyses the reaction N(2)-succinyl-L-ornithine + 2-oxoglutarate = N-succinyl-L-glutamate 5-semialdehyde + L-glutamate. It functions in the pathway amino-acid degradation; L-arginine degradation via AST pathway; L-glutamate and succinate from L-arginine: step 3/5. Catalyzes the transamination of N(2)-succinylornithine and alpha-ketoglutarate into N(2)-succinylglutamate semialdehyde and glutamate. Can also act as an acetylornithine aminotransferase. This chain is Succinylornithine transaminase, found in Escherichia coli O127:H6 (strain E2348/69 / EPEC).